Reading from the N-terminus, the 116-residue chain is MDGSVGTGRQVGEIGAHVKGHNQNSVGICLVGGITASGKNHGEYTEAQWQSLYKLLQELEAEHPKALICGHRDLSPDLNGDGVITPKEWLKDCPCFDVWSWLDSEQVVNLDHLYKE.

The 72-residue stretch at 2–73 folds into the N-acetylmuramoyl-L-alanine amidase domain; sequence DGSVGTGRQV…PKALICGHRD (72 aa).

The protein to phage T3 and T7 N-acetylmuramoyl-L-alanine amidases.

This is an uncharacterized protein from Haemophilus influenzae (strain ATCC 51907 / DSM 11121 / KW20 / Rd).